The sequence spans 172 residues: Ribosome maturation factor RimM (172 aa).

A PRC barrel domain is found at 95-168 (DDGEFYYHEI…RVDVEILEGL (74 aa)).

It belongs to the RimM family. As to quaternary structure, binds ribosomal protein uS19.

Its subcellular location is the cytoplasm. Its function is as follows. An accessory protein needed during the final step in the assembly of 30S ribosomal subunit, possibly for assembly of the head region. Essential for efficient processing of 16S rRNA. May be needed both before and after RbfA during the maturation of 16S rRNA. It has affinity for free ribosomal 30S subunits but not for 70S ribosomes. This chain is Ribosome maturation factor RimM, found in Streptococcus pneumoniae (strain P1031).